A 668-amino-acid polypeptide reads, in one-letter code: MSEAIFLTFPDGSVRSFPAGATGRDVAESISKSLAKSAVAIAIDGTVQDLSDTVADGKIEIITRKDGRALELIRHDAAHVMAEAVQELWPGTQVTIGPVIENGFYYDFAKNEPFTPDDLPKIEKKMKEIIARNAPFTKQIWSREKAKEVFAAKGENYKVELVDAIPAGQDLKIYNQGDWFDLCRGPHMASTGQVGTAFKLMKVAGAYWRGDSNNAMLSRIYGTAWADQADLDNYLHMLAEAEKRDHRKLGREMDLFHFQEEGPGVVFWHGKGWRIFQALVSYMRRRLAVDYEEVNAPQVLDTALWETSGHWGWYQENMFAVKSAHAMTHPEDKEADNRVFALKPMNCPGHVQIFKHGLKSYRELPIRLAEFGLVHRYEPSGALHGLMRVRGFTQDDAHIFCTDEQMAAECLKINDLILSVYEDFGFKEIVVKLSTRPEKRVGSDALWDRAEAVMTDVLKTIEAQSEGRIKTGILPGEGAFYGPKFEYTLKDAIGREWQCGTTQVDFNLPERFGAFYIDSNSEKTQPVMIHRAICGSMERFLGILIENFAGHLPLWVSPLQVVVATITSEADAYGLEVAEALREAGLNVETDFRNEKINYKVREHSVTKVPVIIVCGRKEAEERTVNIRRLGSQDQVSMGLDAAVDSLALEATPPDVRRKAEAKKARAA.

The 64-residue stretch at 1 to 64 (MSEAIFLTFP…ADGKIEIITR (64 aa)) folds into the TGS domain. Positions 245–553 (DHRKLGREMD…LIENFAGHLP (309 aa)) are catalytic. Residues Cys347, His398, and His530 each coordinate Zn(2+).

It belongs to the class-II aminoacyl-tRNA synthetase family. Homodimer. It depends on Zn(2+) as a cofactor.

The protein resides in the cytoplasm. The enzyme catalyses tRNA(Thr) + L-threonine + ATP = L-threonyl-tRNA(Thr) + AMP + diphosphate + H(+). Catalyzes the attachment of threonine to tRNA(Thr) in a two-step reaction: L-threonine is first activated by ATP to form Thr-AMP and then transferred to the acceptor end of tRNA(Thr). Also edits incorrectly charged L-seryl-tRNA(Thr). This Rhizobium leguminosarum bv. trifolii (strain WSM2304) protein is Threonine--tRNA ligase.